We begin with the raw amino-acid sequence, 466 residues long: Transcription factor SOX-10 (466 aa).

Disordered regions lie at residues 1–67 (MAEE…DDDK), 160–198 (LRMQ…TDQG), 213–275 (DHRH…DFGN), 355–375 (QVKT…QPST), and 433–466 (RPLY…LSRP). The segment covering 23 to 32 (LSPSSAPSLG) has biased composition (low complexity). Ser-24 bears the Phosphoserine mark. A dimerization (DIM) region spans residues 62 to 102 (EADDDKFPVCIREAVSQVLSGYDWTLVPMPVRVNGASKSKP). The segment at residues 104–172 (VKRPMNAFMV…QHKKDHPDYK (69 aa)) is a DNA-binding region (HMG box). 2 stretches are compositionally biased toward basic and acidic residues: residues 160–173 (LRMQ…DYKY) and 254–271 (ADPK…KPHI). Residues 228-310 (PEHPSGQSHG…LPPNGHPGHV (83 aa)) form a transactivation domain (TAM) region. Positions 353-466 (KAQVKTETTG…QPVYTTLSRP (114 aa)) are transactivation domain (TAC). A compositionally biased stretch (polar residues) spans 440–466 (SDPSPSGPQSHSPTHWEQPVYTTLSRP).

As to quaternary structure, monomer. Interacts with Armcx3 at the mitochondrial outer membrane surface. Interacts with PAX3. In terms of tissue distribution, predominant expression in glial cells of the nervous system.

It is found in the cytoplasm. The protein localises to the nucleus. Its subcellular location is the mitochondrion outer membrane. Its function is as follows. Transcription factor that plays a central role in developing and mature glia. Specifically activates expression of myelin genes, during oligodendrocyte (OL) maturation, such as DUSP15 and MYRF, thereby playing a central role in oligodendrocyte maturation and CNS myelination. Once induced, MYRF cooperates with SOX10 to implement the myelination program. Transcriptional activator of MITF, acting synergistically with PAX3. Transcriptional activator of MBP, via binding to the gene promoter. This chain is Transcription factor SOX-10 (Sox10), found in Rattus norvegicus (Rat).